Here is a 307-residue protein sequence, read N- to C-terminus: Phosphoribosylaminoimidazole-succinocarboxamide synthase (307 aa).

This sequence belongs to the SAICAR synthetase family.

It carries out the reaction 5-amino-1-(5-phospho-D-ribosyl)imidazole-4-carboxylate + L-aspartate + ATP = (2S)-2-[5-amino-1-(5-phospho-beta-D-ribosyl)imidazole-4-carboxamido]succinate + ADP + phosphate + 2 H(+). The protein operates within purine metabolism; IMP biosynthesis via de novo pathway; 5-amino-1-(5-phospho-D-ribosyl)imidazole-4-carboxamide from 5-amino-1-(5-phospho-D-ribosyl)imidazole-4-carboxylate: step 1/2. The chain is Phosphoribosylaminoimidazole-succinocarboxamide synthase from Thermobifida fusca (strain YX).